We begin with the raw amino-acid sequence, 1024 residues long: MRNFSDILLSQDWQNPHIVKWHCRTPHVPLHSYRTEQEARLDVGGNRQSLNGQWRFALFEKPEAVEPAVIDPDFDDSAWAHIPVPSNWQMQGFDKPIYTNIQYPFADRPPYVPQDNPTGCYRHRFTLEKQALTESIRIVFDGVNSAFHLWCNGHWVGYSQDSRLPAEFELTPYLQEGENLLVAMVLRWSDGSYLEDQDMWWLSGIFRDVYLYRKPILAIEDFFIRTELDALYQHAELRVETRLSQVTRHHQVQVALFDAQGECVARSQALHTGQRVVDEKGAWHDKTEHSLAICSPTLWSDEAPYLYRCVICLLDEDGAPIEFESAAVGFRKVEITQGLLKLNGQPLLIRGVNRHEHHPELGHVMDEASMRRDIELMKQHNFNAVRTAHYPNHPRWYELCDEYGLYVVDEANLETHGQFPMSRLSNDPQWVNAYLQRMIGMVERDKNHPCVIIWSLGNESGIGTNHHAMYQWTKQRDPSRPVQYEGGGANTAATDIVCPMYARVDQHQPHPAVPKYALKNWISLPQENRPLILCEYAHAMGNSLGAFYKYWQAFREFPRLQGGFIWDWVDQGISKWDSEGRHYWGYGGDFGDTINDRQFCINGLLFPDRTPHPALHEVKKVQQPYQFSLSYPKLTIHNERLFAALPLELVVSVLCDGQEIKQERLPLDIAPRGTITLDLASLPMLPEHEYHLNAVLLCREDQPWSNAGHCIASEQWCLQPRRSMLPKITHAPLPQWQQDGDKVRIEAANQQWQFNRQTGLLEQWWQNGQPVLSEPLRDNFYRAVLDNDIGTSEAQHLDPNSWIARWHAAGLDKLRVECDDLRVTTLNESVEVVIDVAHYHQQALALRTRWRYQIFGDARVELNVEVMLCSDLPPLPRVGLTLALPVAENPVSWFGRGPHENYPDRLQSAHVGRYTATVDELHTPYIFPSENGLRCDTRQLQVGALVVEGHFHFSLSRYSQTMLDKAKHSNELVAGDKWYLNLDAQHMGVGGDDSWSQSVHPEFLLTQPHYQYQLTLRVKASSPQ.

Residues N100 and D198 each coordinate substrate. D198 lines the Na(+) pocket. Mg(2+) is bound by residues E414, H416, and E459. Substrate-binding positions include E459 and 535-538; that span reads EYAH. E459 (proton donor) is an active-site residue. The active-site Nucleophile is the E535. A Mg(2+)-binding site is contributed by N595. Positions 599 and 602 each coordinate Na(+). Substrate is bound by residues N602 and W995.

The protein belongs to the glycosyl hydrolase 2 family. Homotetramer. Mg(2+) serves as cofactor. It depends on Na(+) as a cofactor.

The catalysed reaction is Hydrolysis of terminal non-reducing beta-D-galactose residues in beta-D-galactosides.. The chain is Beta-galactosidase from Vibrio cholerae serotype O1 (strain ATCC 39541 / Classical Ogawa 395 / O395).